A 352-amino-acid chain; its full sequence is MKKIVFTGGGSAGHVTPNLAIIPHLQEQNWDISYIGSHQGIEKTIIEKEGIPYYSIASGKLRRYFDLKNIKDPFLVMKGVMDAYVRIRKLKPDVIFSKGGFVSVPVVIGGWLNRVPVLLHESDMTPGLANKIALRFASKIFVTFEEAAKHLPKEKVIYTGSPVREEVLKGNREKGLAFLGFSRKKPVITIMGGSLGAKKINETVREALPELLKKYQIVHLCGKGNLDESLQNKEGYRQFEYVHGELPDILAITDFVISRAGSNAIFEFLTLQKPMVLIPLSKFASRGDQILNAESFERQGYASVLYEEDVTVKSLIKHVEELNQNNEMYKTALKKYNGKEAIQTIIQHISEA.

UDP-N-acetyl-alpha-D-glucosamine-binding positions include 11–13, Arg-164, Ser-194, and Gln-289; that span reads SAG.

This sequence belongs to the glycosyltransferase 28 family. MurG subfamily.

The protein localises to the cell membrane. It carries out the reaction di-trans,octa-cis-undecaprenyl diphospho-N-acetyl-alpha-D-muramoyl-L-alanyl-D-glutamyl-meso-2,6-diaminopimeloyl-D-alanyl-D-alanine + UDP-N-acetyl-alpha-D-glucosamine = di-trans,octa-cis-undecaprenyl diphospho-[N-acetyl-alpha-D-glucosaminyl-(1-&gt;4)]-N-acetyl-alpha-D-muramoyl-L-alanyl-D-glutamyl-meso-2,6-diaminopimeloyl-D-alanyl-D-alanine + UDP + H(+). Its pathway is cell wall biogenesis; peptidoglycan biosynthesis. Functionally, cell wall formation. Catalyzes the transfer of a GlcNAc subunit on undecaprenyl-pyrophosphoryl-MurNAc-pentapeptide (lipid intermediate I) to form undecaprenyl-pyrophosphoryl-MurNAc-(pentapeptide)GlcNAc (lipid intermediate II). The protein is UDP-N-acetylglucosamine--N-acetylmuramyl-(pentapeptide) pyrophosphoryl-undecaprenol N-acetylglucosamine transferase 2 of Bacillus cereus (strain ATCC 10987 / NRS 248).